The following is a 136-amino-acid chain: Ciliary microtubule inner protein 1 (136 aa).

It localises to the cell projection. Its subcellular location is the cilium. This chain is Ciliary microtubule inner protein 1 (Cimip1), found in Mus musculus (Mouse).